A 190-amino-acid chain; its full sequence is MRPAVQVALLGGSFNPPHVGHLMAATYVHATQDVDEVWLMPSWQHPFGKQMEPFEHRVAMCDALCAETSGWLKTSRIEQEPGLSGRTVDTLTLLVARHPDIRWSIIIGSDILRDLPHWKDFHRIEELSRVMVLNRAGYPAPNTLGPPLAEVSSTLIRDLLARGEAPSDLVPARAIAYAREHGLYGLKRTP.

This sequence belongs to the NadD family.

It catalyses the reaction nicotinate beta-D-ribonucleotide + ATP + H(+) = deamido-NAD(+) + diphosphate. It functions in the pathway cofactor biosynthesis; NAD(+) biosynthesis; deamido-NAD(+) from nicotinate D-ribonucleotide: step 1/1. In terms of biological role, catalyzes the reversible adenylation of nicotinate mononucleotide (NaMN) to nicotinic acid adenine dinucleotide (NaAD). In Myxococcus xanthus (strain DK1622), this protein is Probable nicotinate-nucleotide adenylyltransferase.